Reading from the N-terminus, the 318-residue chain is Non-homologous end joining protein Ku (318 aa).

The 184-residue stretch at 10–193 folds into the Ku domain; sequence AFGLVNVPVK…EVQIKPAELK (184 aa). The disordered stretch occupies residues 259–318; sequence SVKARKGGKSDSKDDSDSESDSKESKSDSKPAKKAPAKKAAAKKSTAKKAPAKKAAAKKS. Residues 266 to 289 show a composition bias toward basic and acidic residues; that stretch reads GKSDSKDDSDSESDSKESKSDSKP. The segment covering 290–318 has biased composition (basic residues); sequence AKKAPAKKAAAKKSTAKKAPAKKAAAKKS.

This sequence belongs to the prokaryotic Ku family. Homodimer. Interacts with Sir2 and probably also with LigD; may form a trimeric complex during NHEJ.

With LigD forms a non-homologous end joining (NHEJ) repair enzyme which repairs blunt-end and 5'-overhang double strand breaks (DSB) with about 50% fidelity, and DSB with non-complementary 3' ends. Plays a partial role in NHEJ on 3'-overhang repair of complementary ends. NHEJ repairs DSB with blunt ends and 5' overhangs with a high level of nucleotide insertion/deletion, without a need for microhomology. This protein but not LigD also suppresses homologous recombination. Overexpression dramatically increases the efficiency of NHEJ with no effect on repair fidelity. The polypeptide is Non-homologous end joining protein Ku (Mycolicibacterium smegmatis (strain ATCC 700084 / mc(2)155) (Mycobacterium smegmatis)).